Reading from the N-terminus, the 62-residue chain is Large ribosomal subunit protein bL28 (62 aa).

This sequence belongs to the bacterial ribosomal protein bL28 family.

In Phytoplasma mali (strain AT), this protein is Large ribosomal subunit protein bL28.